The following is an 883-amino-acid chain: Valine--tRNA ligase (883 aa).

The 'HIGH' region signature appears at 46-56 (PNVTGKLHLGH). The short motif at 520 to 524 (KMSKS) is the 'KMSKS' region element. Lysine 523 contributes to the ATP binding site. Residues 809-844 (LVDLLNVEEELARLEKELAKWQKELDMVGKKLSNER) are a coiled coil.

It belongs to the class-I aminoacyl-tRNA synthetase family. ValS type 1 subfamily. Monomer.

The protein localises to the cytoplasm. The catalysed reaction is tRNA(Val) + L-valine + ATP = L-valyl-tRNA(Val) + AMP + diphosphate. In terms of biological role, catalyzes the attachment of valine to tRNA(Val). As ValRS can inadvertently accommodate and process structurally similar amino acids such as threonine, to avoid such errors, it has a 'posttransfer' editing activity that hydrolyzes mischarged Thr-tRNA(Val) in a tRNA-dependent manner. This Streptococcus pneumoniae (strain ATCC BAA-255 / R6) protein is Valine--tRNA ligase.